Reading from the N-terminus, the 264-residue chain is ATP synthase subunit a (264 aa).

Helical transmembrane passes span 39–59 (LDTLIISVVLGALFILIFYIV), 97–117 (VAPLALTIFIWVFLMNFMDLV), 139–159 (TADPTLTFAMSITVFVLVIFY), 205–225 (LFGNLFAGELIFILIALLPWW), and 239–259 (LLVITVQAFIFMMLTVVYISL).

Belongs to the ATPase A chain family. In terms of assembly, F-type ATPases have 2 components, CF(1) - the catalytic core - and CF(0) - the membrane proton channel. CF(1) has five subunits: alpha(3), beta(3), gamma(1), delta(1), epsilon(1). CF(0) has three main subunits: a(1), b(2) and c(9-12). The alpha and beta chains form an alternating ring which encloses part of the gamma chain. CF(1) is attached to CF(0) by a central stalk formed by the gamma and epsilon chains, while a peripheral stalk is formed by the delta and b chains.

It localises to the cell inner membrane. Functionally, key component of the proton channel; it plays a direct role in the translocation of protons across the membrane. In Coxiella burnetii (strain CbuK_Q154) (Coxiella burnetii (strain Q154)), this protein is ATP synthase subunit a.